Here is a 411-residue protein sequence, read N- to C-terminus: UPF0597 protein Fnod_1278 (411 aa).

It belongs to the UPF0597 family.

The chain is UPF0597 protein Fnod_1278 from Fervidobacterium nodosum (strain ATCC 35602 / DSM 5306 / Rt17-B1).